The sequence spans 334 residues: Anthranilate phosphoribosyltransferase (334 aa).

5-phospho-alpha-D-ribose 1-diphosphate-binding positions include G79, 82 to 83 (GD), S87, 89 to 92 (NIST), 107 to 115 (KHGNRSISS), and S119. Residue G79 coordinates anthranilate. Mg(2+) is bound at residue S91. An anthranilate-binding site is contributed by N110. R165 contacts anthranilate. D224 and E225 together coordinate Mg(2+).

Belongs to the anthranilate phosphoribosyltransferase family. In terms of assembly, homodimer. Requires Mg(2+) as cofactor.

It catalyses the reaction N-(5-phospho-beta-D-ribosyl)anthranilate + diphosphate = 5-phospho-alpha-D-ribose 1-diphosphate + anthranilate. It participates in amino-acid biosynthesis; L-tryptophan biosynthesis; L-tryptophan from chorismate: step 2/5. Catalyzes the transfer of the phosphoribosyl group of 5-phosphorylribose-1-pyrophosphate (PRPP) to anthranilate to yield N-(5'-phosphoribosyl)-anthranilate (PRA). The polypeptide is Anthranilate phosphoribosyltransferase (Streptococcus sanguinis (strain SK36)).